A 344-amino-acid chain; its full sequence is C-C chemokine receptor-like 2 (344 aa).

Residues 1–43 lie on the Extracellular side of the membrane; that stretch reads MANYTLAPEDEYDVLIEGELESDEAEQCDKYDAQALSAQLVPS. Residue N3 is glycosylated (N-linked (GlcNAc...) asparagine). A helical membrane pass occupies residues 44–64; the sequence is LCSAVFVIGVLDNLLVVLILV. The Cytoplasmic segment spans residues 65-74; the sequence is KYKGLKRVEN. A helical membrane pass occupies residues 75-95; the sequence is IYLLNLAVSNLCFLLTLPFWA. The Extracellular portion of the chain corresponds to 96–104; it reads HAGGDPMCK. A disulfide bridge connects residues C103 and C181. Residues 105–125 traverse the membrane as a helical segment; it reads ILIGLYFVGLYSETFFNCLLT. The Cytoplasmic portion of the chain corresponds to 126–144; the sequence is VQRYLVFLHKGNFFSARRR. A helical transmembrane segment spans residues 145-165; sequence VPCGIITSVLAWVTAILATLP. At 166–198 the chain is on the extracellular side; that stretch reads EFVVYKPQMEDQKYKCAFSRTPFLPADETFWKH. A helical membrane pass occupies residues 199–219; that stretch reads FLTLKMNISVLVLPLFIFTFL. Over 220–238 the chain is Cytoplasmic; that stretch reads YVQMRKTLRFREQRYSLFK. A helical membrane pass occupies residues 239-259; sequence LVFAIMVVFLLMWAPYNIAFF. At 260–286 the chain is on the extracellular side; it reads LSTFKEHFSLSDCKSSYNLDKSVHITK. The helical transmembrane segment at 287 to 307 threads the bilayer; the sequence is LIATTHCCINPLLYAFLDGTF. Over 308 to 344 the chain is Cytoplasmic; the sequence is SKYLCRCFHLRSNTPLQPRGQSAQGTSREEPDHSTEV. The segment covering 324 to 333 has biased composition (polar residues); sequence QPRGQSAQGT. The segment at 324–344 is disordered; sequence QPRGQSAQGTSREEPDHSTEV. Over residues 334-344 the composition is skewed to basic and acidic residues; sequence SREEPDHSTEV.

This sequence belongs to the G-protein coupled receptor 1 family. Expressed abundantly in immunal tissues such as spleen, fetal liver, lymph node and bone marrow. Strong expression also in lung and heart. Expressed in almost all hematopoietic cells including monocytes, macrophages, PMNs, T-cells (both CD4+ and CD8+), monocyte-derived iDCs, NK cells, and CD34+ progenitor cells. B-cells expressed isoform 1 but not isoform 2. Up-regulated on synovial neutrophils of rheumatoid arthritis patients.

The protein resides in the cell membrane. In terms of biological role, receptor for CCL19 and chemerin/RARRES2. Does not appear to be a signaling receptor, but may have a role in modulating chemokine-triggered immune responses by capturing and internalizing CCL19 or by presenting RARRES2 ligand to CMKLR1, a functional signaling receptors. Plays a critical role for the development of Th2 responses. In Homo sapiens (Human), this protein is C-C chemokine receptor-like 2 (CCRL2).